A 569-amino-acid chain; its full sequence is Small ribosomal subunit protein bS1 (569 aa).

S1 motif domains lie at 52 to 116, 134 to 199, 220 to 288, 305 to 375, 392 to 462, and 479 to 548; these read GAIL…LSRE, GSIV…VSRR, GERR…LGLK, GKRV…LGLK, GLRV…LGVK, and GSDI…LSIK.

Belongs to the bacterial ribosomal protein bS1 family.

Functionally, binds mRNA; thus facilitating recognition of the initiation point. It is needed to translate mRNA with a short Shine-Dalgarno (SD) purine-rich sequence. The protein is Small ribosomal subunit protein bS1 (rpsA) of Chlamydia trachomatis serovar D (strain ATCC VR-885 / DSM 19411 / UW-3/Cx).